The chain runs to 486 residues: ATP synthase subunit beta (486 aa).

Residue 164–171 (GGAGVGKT) participates in ATP binding.

This sequence belongs to the ATPase alpha/beta chains family. In terms of assembly, F-type ATPases have 2 components, CF(1) - the catalytic core - and CF(0) - the membrane proton channel. CF(1) has five subunits: alpha(3), beta(3), gamma(1), delta(1), epsilon(1). CF(0) has four main subunits: a(1), b(1), b'(1) and c(9-12).

The protein localises to the cellular thylakoid membrane. The enzyme catalyses ATP + H2O + 4 H(+)(in) = ADP + phosphate + 5 H(+)(out). In terms of biological role, produces ATP from ADP in the presence of a proton gradient across the membrane. The catalytic sites are hosted primarily by the beta subunits. The protein is ATP synthase subunit beta of Prochlorococcus marinus (strain MIT 9301).